We begin with the raw amino-acid sequence, 620 residues long: Glutathione-regulated potassium-efflux system protein KefC (620 aa).

A run of 12 helical transmembrane segments spans residues 4 to 24 (HTLLQALIYLGSAALIVPIAV), 26 to 46 (LGLGSVLGYLIAGCIIGPWGL), 54 to 74 (SILHFAEIGVVLMLFVIGLEL), 90 to 110 (GALQMVVCGGLIGLFCMFLGL), 114 to 134 (VAELIGMTLALSSTAIAMQAM), 149 to 169 (FAVLLFQDIAAIPLVAMIPLL), 178 to 198 (LGAFALSALKVAGALALVVLL), 218 to 238 (VFSAVALFLVFGFGLLLEEVG), 270 to 290 (GLLLGLFFIGVGMSIDFGTLV), 294 to 314 (LRILLLLAGFLAIKIVMLWLV), 327 to 347 (WFAVLLGQGSEFAFVVFGAAQ), and 359 to 379 (ALTLAVALSMAATPIFLVLLT). Residues 399–518 (QPRVIVAGFG…AGVAMPERET (120 aa)) enclose the RCK N-terminal domain. The segment at 599 to 620 (QGTAEGKHSGEAADEPEVKPSI) is disordered.

Belongs to the monovalent cation:proton antiporter 2 (CPA2) transporter (TC 2.A.37) family. KefC subfamily. In terms of assembly, homodimer. Interacts with the regulatory subunit KefF.

It is found in the cell inner membrane. Functionally, pore-forming subunit of a potassium efflux system that confers protection against electrophiles. Catalyzes K(+)/H(+) antiport. This Salmonella dublin (strain CT_02021853) protein is Glutathione-regulated potassium-efflux system protein KefC.